The chain runs to 599 residues: Fumarate reductase flavoprotein subunit (599 aa).

FAD contacts are provided by residues 12 to 16, 36 to 38, 44 to 52, 156 to 158, and Asp212; these read GAGGG, VSK, THTVAAEGG, and HFV. Position 45 is a tele-8alpha-FAD histidine (His45). Residues His233 and Arg249 contribute to the active site. Residues 357-358, Glu381, and 392-398 contribute to the FAD site; these read HY and RLGSNSL.

Belongs to the FAD-dependent oxidoreductase 2 family. FRD/SDH subfamily. Part of an enzyme complex containing four subunits: a flavoprotein (FrdA), an iron-sulfur protein (FrdB), and two hydrophobic anchor proteins (FrdC and FrdD). It depends on FAD as a cofactor.

It localises to the cell inner membrane. It catalyses the reaction a quinone + succinate = fumarate + a quinol. The catalysed reaction is a menaquinone + succinate = a menaquinol + fumarate. In Haemophilus influenzae (strain ATCC 51907 / DSM 11121 / KW20 / Rd), this protein is Fumarate reductase flavoprotein subunit (frdA).